Reading from the N-terminus, the 295-residue chain is Glutamate-binding protein GluB (295 aa).

The signal sequence occupies residues 1–26 (MSAKRTFTRIGAILGATALAGVTLTA). Cys-27 carries N-palmitoyl cysteine lipidation. The S-diacylglycerol cysteine moiety is linked to residue Cys-27.

The protein belongs to the bacterial solute-binding protein 3 family. The complex is composed of two ATP-binding proteins (GluA), two transmembrane proteins (GluC and GluD) and a solute-binding protein (GluB).

It is found in the cell membrane. Binding of glutamate or asparatate induces a higher thermal stability of the protein structure. In terms of biological role, part of the ABC transporter complex GluABCD involved in glutamate uptake. Binds glutamate with a high affinity. Also binds aspartate with high affinity, suggesting that GluB could be involved in the transport of both amino acid residues into the cell. This is Glutamate-binding protein GluB from Corynebacterium glutamicum (strain ATCC 13032 / DSM 20300 / JCM 1318 / BCRC 11384 / CCUG 27702 / LMG 3730 / NBRC 12168 / NCIMB 10025 / NRRL B-2784 / 534).